A 403-amino-acid chain; its full sequence is Creatinase (403 aa).

The active site involves H232.

The protein belongs to the peptidase M24 family. Creatinase subfamily. Homodimer.

The catalysed reaction is creatine + H2O = sarcosine + urea. This is Creatinase from Pseudomonas putida (Arthrobacter siderocapsulatus).